Consider the following 374-residue polypeptide: Peptide chain release factor 2 (374 aa).

At Gln252 the chain carries N5-methylglutamine.

This sequence belongs to the prokaryotic/mitochondrial release factor family. Post-translationally, methylated by PrmC. Methylation increases the termination efficiency of RF2.

Its subcellular location is the cytoplasm. Functionally, peptide chain release factor 2 directs the termination of translation in response to the peptide chain termination codons UGA and UAA. The polypeptide is Peptide chain release factor 2 (Stenotrophomonas maltophilia (strain R551-3)).